The primary structure comprises 59 residues: Large ribosomal subunit protein bL32 (59 aa).

Disordered regions lie at residues 1 to 23 (MAVQQNKKSPSKRGMHRSHDFLT) and 35 to 59 (EVHLRHHVSPNGYYRGKKVVKTKND). Residues 49-59 (RGKKVVKTKND) show a composition bias toward basic residues.

The protein belongs to the bacterial ribosomal protein bL32 family.

This chain is Large ribosomal subunit protein bL32, found in Burkholderia ambifaria (strain MC40-6).